We begin with the raw amino-acid sequence, 78 residues long: Major outer membrane lipoprotein Lpp (78 aa).

A signal peptide spans methionine 1 to glycine 20. Cysteine 21 is lipidated: N-palmitoyl cysteine. Cysteine 21 carries S-diacylglycerol cysteine lipidation. Repeats lie at residues asparagine 24–valine 34 and asparagine 38–valine 48. The stretch at isoleucine 27–alanine 75 forms a coiled coil. Lysine 78 is subject to N6-murein peptidoglycan lysine.

Belongs to the Lpp family. In terms of assembly, homotrimer.

It localises to the cell outer membrane. It is found in the secreted. The protein resides in the cell wall. Functionally, a highly abundant outer membrane lipoprotein that controls the distance between the inner and outer membranes. The only protein known to be covalently linked to the peptidoglycan network (PGN). Also non-covalently binds the PGN. The link between the cell outer membrane and PGN contributes to maintenance of the structural and functional integrity of the cell envelope, and maintains the correct distance between the PGN and the outer membrane. The polypeptide is Major outer membrane lipoprotein Lpp (Yersinia pestis).